The sequence spans 87 residues: Signal recognition particle 19 kDa protein (87 aa).

This sequence belongs to the SRP19 family. Part of the signal recognition particle protein translocation system, which is composed of SRP and FtsY. Archaeal SRP consists of a 7S RNA molecule of 300 nucleotides and two protein subunits: SRP54 and SRP19.

The protein resides in the cytoplasm. In terms of biological role, involved in targeting and insertion of nascent membrane proteins into the cytoplasmic membrane. Binds directly to 7S RNA and mediates binding of the 54 kDa subunit of the SRP. This chain is Signal recognition particle 19 kDa protein, found in Methanocaldococcus jannaschii (strain ATCC 43067 / DSM 2661 / JAL-1 / JCM 10045 / NBRC 100440) (Methanococcus jannaschii).